Reading from the N-terminus, the 181-residue chain is Adenylate kinase (181 aa).

Residue 10–15 (GAGKGT) coordinates ATP. The interval 30-59 (STGDLFRANIGEGTPLGLEAKSYIDAGKLV) is NMP. AMP is bound by residues Thr-31, Arg-36, 57–59 (KLV), 85–88 (GFPR), and Gln-92. The tract at residues 126–132 (ARGRADD) is LID. Arg-127 serves as a coordination point for ATP. AMP contacts are provided by Arg-129 and Arg-140. Gly-166 is a binding site for ATP.

Belongs to the adenylate kinase family. Monomer.

The protein localises to the cytoplasm. It catalyses the reaction AMP + ATP = 2 ADP. It participates in purine metabolism; AMP biosynthesis via salvage pathway; AMP from ADP: step 1/1. In terms of biological role, catalyzes the reversible transfer of the terminal phosphate group between ATP and AMP. Plays an important role in cellular energy homeostasis and in adenine nucleotide metabolism. The polypeptide is Adenylate kinase (Corynebacterium aurimucosum (strain ATCC 700975 / DSM 44827 / CIP 107346 / CN-1) (Corynebacterium nigricans)).